A 109-amino-acid polypeptide reads, in one-letter code: Globin (109 aa).

A Globin domain is found at 3–109 (PLTAAEVSSL…IFPIAGIHAL (107 aa)).

This sequence belongs to the globin family. Monomer.

In terms of biological role, oxygen binding protein. The protein is Globin of Dicrocoelium dendriticum (Small liver fluke).